The following is a 412-amino-acid chain: MPSQGNNKNSENITQNPIEGELGSVIVEHLTKRIRNFTKKKQKILKLEEIAASDSNSLNDDQRKALQGKDAVLTTLNELKELLSQIDATRIRDEKHKRQFEATENAKRKEEIEAQYREGYDTAQKQVSSLVRFLRFASHNCVHPSDDAPFNSAVEKLLVIVYEGTEKSEKAVADLNDSSTDVVPESEVSFQTISSRVDNFFAAPLPSEQAEELIEDDYAEQPEQAVGQPIEQQSISDDEARQTNRPLNRGIQFLNESEIEGQHVEEPALPSETSVPANSTLQVPTENVEVDVLGKDGTNIYPTQNQVVEQKQMQQKLDSMSPEWYQAADPSNGVVDGTPKLNSNTRGSSKRPSVNRSQGSGQRGRGGRGFYRGGRGRGGFFNRSKRGQYSNSNNSTSQPSPNAELSNFNPVA.

Residues 1-17 (MPSQGNNKNSENITQNP) are compositionally biased toward polar residues. Disordered stretches follow at residues 1 to 20 (MPSQ…PIEG), 223 to 243 (EQAV…ARQT), and 310 to 412 (QKQM…NPVA). Over residues 340 to 355 (KLNSNTRGSSKRPSVN) the composition is skewed to polar residues. The span at 361-379 (GQRGRGGRGFYRGGRGRGG) shows a compositional bias: gly residues. Residues 390–402 (SNSNNSTSQPSPN) are compositionally biased toward low complexity. The segment covering 403 to 412 (AELSNFNPVA) has biased composition (polar residues).

This is an uncharacterized protein from Schizosaccharomyces pombe (strain 972 / ATCC 24843) (Fission yeast).